The following is a 158-amino-acid chain: NAD(P)H-quinone oxidoreductase subunit J, chloroplastic (158 aa).

It belongs to the complex I 30 kDa subunit family. As to quaternary structure, NDH is composed of at least 16 different subunits, 5 of which are encoded in the nucleus.

The protein resides in the plastid. The protein localises to the chloroplast thylakoid membrane. The catalysed reaction is a plastoquinone + NADH + (n+1) H(+)(in) = a plastoquinol + NAD(+) + n H(+)(out). It catalyses the reaction a plastoquinone + NADPH + (n+1) H(+)(in) = a plastoquinol + NADP(+) + n H(+)(out). Its function is as follows. NDH shuttles electrons from NAD(P)H:plastoquinone, via FMN and iron-sulfur (Fe-S) centers, to quinones in the photosynthetic chain and possibly in a chloroplast respiratory chain. The immediate electron acceptor for the enzyme in this species is believed to be plastoquinone. Couples the redox reaction to proton translocation, and thus conserves the redox energy in a proton gradient. This is NAD(P)H-quinone oxidoreductase subunit J, chloroplastic from Jasminum nudiflorum (Winter jasmine).